We begin with the raw amino-acid sequence, 136 residues long: UPF0216 protein PF0452 (136 aa).

The protein belongs to the UPF0216 family.

This chain is UPF0216 protein PF0452, found in Pyrococcus furiosus (strain ATCC 43587 / DSM 3638 / JCM 8422 / Vc1).